A 204-amino-acid chain; its full sequence is Synaptosomal-associated protein 25-A (204 aa).

Over residues 1–11 (MAEDADMRNEL) the composition is skewed to basic and acidic residues. Residues 1-25 (MAEDADMRNELSDMQQRADQLADES) are disordered. T-SNARE coiled-coil homology domains are found at residues 19–81 (DQLA…LNDL) and 138–200 (DARE…ATKM).

The protein belongs to the SNAP-25 family.

The protein resides in the synapse. It localises to the synaptosome. The protein localises to the cell membrane. May play an important role in the synaptic function of specific neuronal systems. Associates with proteins involved in vesicle docking and membrane fusion. This is Synaptosomal-associated protein 25-A (snap25a) from Carassius auratus (Goldfish).